A 279-amino-acid chain; its full sequence is Protein PHOTOPERIODIC CONTROL OF HYPOCOTYL 1-LIKE (279 aa).

As to quaternary structure, interacts with light-activated phyB. Binds directly to PIF1 and COP1. Post-translationally, ubiquitinated by COP1 in darkness; this leads to proteasomal degradation. In terms of tissue distribution, mainly expressed in cotyledons, hypocotyls, leaves.

It is found in the nucleus. Functionally, together with PCH1, regulates growth and development adaptation to the ambient environment by controlling negatively phytochrome B (phyB) dark reversion, a temperature-dependent thermal relaxation process during which phyB reverts from the active to the inactive state. Contributes to red (R) light-triggered photomorphogenesis. Promotes various light responses such as seed germination, hypocotyl gravitropism and chlorophyll biosynthesis, via direct interaction with PIF1 and COP1. Prevents DNA-binding ability of PIF1 to negatively regulate the expressions of its target genes. Facilitates the physical interaction between phyB and PIF1 and the subsequent light-induced degradation of PIF1. The chain is Protein PHOTOPERIODIC CONTROL OF HYPOCOTYL 1-LIKE from Arabidopsis thaliana (Mouse-ear cress).